The sequence spans 456 residues: Dual-specificity RNA methyltransferase RlmN (456 aa).

The tract at residues 1-21 (MIQRHLGQPRLIQNGGDAGGV) is disordered. Glu-175 acts as the Proton acceptor in catalysis. Residues 183–416 (DEERGAVCIS…QDAGYSAPIR (234 aa)) enclose the Radical SAM core domain. A disulfide bridge connects residues Cys-190 and Cys-427. [4Fe-4S] cluster contacts are provided by Cys-197, Cys-201, and Cys-204. Residues 253–254 (GE), Ser-285, 307–309 (SLH), and Asn-384 contribute to the S-adenosyl-L-methionine site. Catalysis depends on Cys-427, which acts as the S-methylcysteine intermediate.

This sequence belongs to the radical SAM superfamily. RlmN family. [4Fe-4S] cluster serves as cofactor.

The protein localises to the cytoplasm. The enzyme catalyses adenosine(2503) in 23S rRNA + 2 reduced [2Fe-2S]-[ferredoxin] + 2 S-adenosyl-L-methionine = 2-methyladenosine(2503) in 23S rRNA + 5'-deoxyadenosine + L-methionine + 2 oxidized [2Fe-2S]-[ferredoxin] + S-adenosyl-L-homocysteine. It carries out the reaction adenosine(37) in tRNA + 2 reduced [2Fe-2S]-[ferredoxin] + 2 S-adenosyl-L-methionine = 2-methyladenosine(37) in tRNA + 5'-deoxyadenosine + L-methionine + 2 oxidized [2Fe-2S]-[ferredoxin] + S-adenosyl-L-homocysteine. In terms of biological role, specifically methylates position 2 of adenine 2503 in 23S rRNA and position 2 of adenine 37 in tRNAs. m2A2503 modification seems to play a crucial role in the proofreading step occurring at the peptidyl transferase center and thus would serve to optimize ribosomal fidelity. This is Dual-specificity RNA methyltransferase RlmN from Paramagnetospirillum magneticum (strain ATCC 700264 / AMB-1) (Magnetospirillum magneticum).